The chain runs to 184 residues: ATP-dependent protease subunit HslV (184 aa).

The active site involves threonine 12. Na(+) is bound by residues alanine 166, cysteine 169, and threonine 172.

The protein belongs to the peptidase T1B family. HslV subfamily. In terms of assembly, a double ring-shaped homohexamer of HslV is capped on each side by a ring-shaped HslU homohexamer. The assembly of the HslU/HslV complex is dependent on binding of ATP.

The protein resides in the cytoplasm. It carries out the reaction ATP-dependent cleavage of peptide bonds with broad specificity.. With respect to regulation, allosterically activated by HslU binding. Functionally, protease subunit of a proteasome-like degradation complex believed to be a general protein degrading machinery. The protein is ATP-dependent protease subunit HslV of Nitrobacter hamburgensis (strain DSM 10229 / NCIMB 13809 / X14).